A 201-amino-acid chain; its full sequence is Putative 3-methyladenine DNA glycosylase (201 aa).

It belongs to the DNA glycosylase MPG family.

The sequence is that of Putative 3-methyladenine DNA glycosylase from Trichodesmium erythraeum (strain IMS101).